Here is a 139-residue protein sequence, read N- to C-terminus: MEAVVFLFSLLDCCALIFLSVYFIITLSDLECDYINARSCCSKLNKWVIPELVGHTIVTVLMLVSLHWFIFLLNLPVATWNIYRFIMVPSGNMGVFDPTEIHNRGQLKSHMKEAMIKLGFYLLCFFMYLYSMILALIND.

3 helical membrane passes run 5–25 (VFLFSLLDCCALIFLSVYFII), 57–77 (IVTVLMLVSLHWFIFLLNLPV), and 118–138 (LGFYLLCFFMYLYSMILALIN).

Belongs to the cornichon family. Interacts with Sec23/24 complex components SEC24B and SEC24D. Interacts with CCR5. Interacts with ADRB2 in the early secretory pathway.

The protein localises to the membrane. The protein resides in the endoplasmic reticulum. Its subcellular location is the endoplasmic reticulum-Golgi intermediate compartment. Involved in G protein-coupled receptors (GPCRs) trafficking from the endoplasmic reticulum to the cell surface; it promotes the exit of GPCRs from the early secretory pathway, likely through interaction with the COPII machinery. The polypeptide is Protein cornichon homolog 4 (Cnih4) (Mus musculus (Mouse)).